Consider the following 306-residue polypeptide: Ribosomal RNA small subunit methyltransferase A (306 aa).

S-adenosyl-L-methionine contacts are provided by asparagine 37, valine 39, glycine 64, glutamate 85, aspartate 115, and asparagine 134.

This sequence belongs to the class I-like SAM-binding methyltransferase superfamily. rRNA adenine N(6)-methyltransferase family. RsmA subfamily.

It is found in the cytoplasm. It catalyses the reaction adenosine(1518)/adenosine(1519) in 16S rRNA + 4 S-adenosyl-L-methionine = N(6)-dimethyladenosine(1518)/N(6)-dimethyladenosine(1519) in 16S rRNA + 4 S-adenosyl-L-homocysteine + 4 H(+). Its function is as follows. Specifically dimethylates two adjacent adenosines (A1518 and A1519) in the loop of a conserved hairpin near the 3'-end of 16S rRNA in the 30S particle. May play a critical role in biogenesis of 30S subunits. This chain is Ribosomal RNA small subunit methyltransferase A, found in Mycobacterium leprae (strain Br4923).